Here is a 255-residue protein sequence, read N- to C-terminus: 5-oxoprolinase subunit A (255 aa).

The protein belongs to the LamB/PxpA family. In terms of assembly, forms a complex composed of PxpA, PxpB and PxpC.

The enzyme catalyses 5-oxo-L-proline + ATP + 2 H2O = L-glutamate + ADP + phosphate + H(+). Its function is as follows. Catalyzes the cleavage of 5-oxoproline to form L-glutamate coupled to the hydrolysis of ATP to ADP and inorganic phosphate. The protein is 5-oxoprolinase subunit A of Rhodopseudomonas palustris (strain BisA53).